The following is a 764-amino-acid chain: Transient receptor potential cation channel subfamily V member 2 (764 aa).

Residues 1–46 (MTSPSSSPVFRLETLDGGQEDGSEADRGKLDFGSGLPPMESQFQGE) are disordered. Residues 1 to 388 (MTSPSSSPVF…LLQAKWDLLI (388 aa)) form a required for interaction with SLC50A1 region. Residues 1–390 (MTSPSSSPVF…QAKWDLLIPK (390 aa)) are Cytoplasmic-facing. Ser-6 carries the phosphoserine modification. 6 ANK repeats span residues 72-114 (NRFD…TEGS), 115-161 (TGKT…DDYY), 162-207 (RGHS…TCFY), 208-243 (FGEL…ATDS), 244-292 (QGNT…IRNL), and 293-319 (QDLT…REFS). The helical transmembrane segment at 391–411 (FFLNFLCNLIYMFIFTAVAYH) threads the bilayer. Topologically, residues 412-434 (QPTLKKQAAPHLKAEVGNSMLLT) are extracellular. A helical transmembrane segment spans residues 435 to 455 (GHILILLGGIYLLVGQLWYFW). The Cytoplasmic segment spans residues 456-471 (RRHVFIWISFIDSYFE). Residues 472 to 492 (ILFLFQALLTVVSQVLCFLAI) form a helical membrane-spanning segment. Residue Glu-493 is a topological domain, extracellular. The chain crosses the membrane as a helical span at residues 494 to 514 (WYLPLLVSALVLGWLNLLYYT). Over 515 to 537 (RGFQHTGIYSVMIQKVILRDLLR) the chain is Cytoplasmic. A helical transmembrane segment spans residues 538–558 (FLLIYLVFLFGFAVALVSLSQ). The segment at 562-585 (RPEAPTGPNATESVQPMEGQEDEG) is disordered. An N-linked (GlcNAc...) asparagine glycan is attached at Asn-570. The pore-forming intramembrane region spans 572-609 (TESVQPMEGQEDEGNGAQYRGILEASLELFKFTIGMGE). The chain crosses the membrane as a helical span at residues 622-642 (VLLLLLAYVLLTYILLLNMLI). Over 643–764 (ALMSETVNSV…YVPVQLLQSN (122 aa)) the chain is Cytoplasmic. A disordered region spans residues 725–756 (PSGAGVPRTLENPVLASPPKEDEDGASEENYV). Phosphoserine is present on residues Ser-751 and Ser-763.

The protein belongs to the transient receptor (TC 1.A.4) family. TrpV subfamily. TRPV2 sub-subfamily. As to quaternary structure, homotetramer. Interacts with a cAMP-dependent protein kinase type II regulatory subunit (PRKAR2A or PRKAR2B) and ACBD3. Interacts with SLC50A1; the interaction probably occurs intracellularly and depends on TRPV2 N-glycosylation. N-glycosylated. Post-translationally, phosphorylated by PKA.

The protein resides in the cell membrane. Its subcellular location is the cytoplasm. It is found in the melanosome. It catalyses the reaction Ca(2+)(in) = Ca(2+)(out). It carries out the reaction Mg(2+)(in) = Mg(2+)(out). The enzyme catalyses Na(+)(in) = Na(+)(out). The catalysed reaction is K(+)(in) = K(+)(out). Calcium-permeable, non-selective cation channel with an outward rectification. Seems to be regulated, at least in part, by IGF1, PDGF and neuropeptide head activator. May transduce physical stimuli in mast cells. Activated by temperatures higher than 52 degrees Celsius; is not activated by vanilloids and acidic pH. This is Transient receptor potential cation channel subfamily V member 2 (TRPV2) from Homo sapiens (Human).